A 443-amino-acid polypeptide reads, in one-letter code: MTHIQLDYGKTLEFFDKHELDQQKDIVKTIHQTIHKGTGAGNDFLGWLDLPVDYDKEEFSRIVEASKRIKSNSDVLVVIGIGGSYLGARAAIEMLTSSFRTNTEYPEIVFVGNHLSSSYTKELLDYLQGKDFSVNVISKSGTTTEPAVAFRLFKQLVEEKYGKDEAKKRIFATTDKSKGALKQLADNEGYETFVVPDDVGGRYSVLTAVGLLPIATAGINIESIMIGAAKAREELSSDDLDQNIAYQYATIRNILYSKGYTTEMLINYEPSMQYFNEWWKQLYGESEGKDFKGIYPSSANYTTDLHSLGQYVQEGRRFLFETVVKVNHPKHDIKIEEDADDLDGLNYLAGKSIDEVNTKAFEGTLLAHTDGGVPNIVVNIPQLDEETFGYVVYFFELACAMSGYQLGVNPFNQPGVEAYKQNMFALLGKPGFEDKKKELENRL.

E285 acts as the Proton donor in catalysis. Active-site residues include H306 and K420.

It belongs to the GPI family.

The protein localises to the cytoplasm. It carries out the reaction alpha-D-glucose 6-phosphate = beta-D-fructose 6-phosphate. It participates in carbohydrate biosynthesis; gluconeogenesis. The protein operates within carbohydrate degradation; glycolysis; D-glyceraldehyde 3-phosphate and glycerone phosphate from D-glucose: step 2/4. Functionally, catalyzes the reversible isomerization of glucose-6-phosphate to fructose-6-phosphate. This Staphylococcus epidermidis (strain ATCC 12228 / FDA PCI 1200) protein is Glucose-6-phosphate isomerase.